The primary structure comprises 213 residues: tRNA (guanine-N(7)-)-methyltransferase (213 aa).

S-adenosyl-L-methionine-binding residues include E44, E69, N96, and D118. D118 is an active-site residue. Position 122 (K122) interacts with substrate. The segment at 124–129 (RHEKRR) is interaction with RNA. Residues D154 and 191-194 (TEYE) each bind substrate.

The protein belongs to the class I-like SAM-binding methyltransferase superfamily. TrmB family.

It catalyses the reaction guanosine(46) in tRNA + S-adenosyl-L-methionine = N(7)-methylguanosine(46) in tRNA + S-adenosyl-L-homocysteine. The protein operates within tRNA modification; N(7)-methylguanine-tRNA biosynthesis. In terms of biological role, catalyzes the formation of N(7)-methylguanine at position 46 (m7G46) in tRNA. The protein is tRNA (guanine-N(7)-)-methyltransferase of Oceanobacillus iheyensis (strain DSM 14371 / CIP 107618 / JCM 11309 / KCTC 3954 / HTE831).